A 457-amino-acid chain; its full sequence is NADP-specific glutamate dehydrogenase (457 aa).

The active site involves Lys111.

This sequence belongs to the Glu/Leu/Phe/Val dehydrogenases family. Homohexamer.

It catalyses the reaction L-glutamate + NADP(+) + H2O = 2-oxoglutarate + NH4(+) + NADPH + H(+). This is NADP-specific glutamate dehydrogenase (gdhA) from Agaricus bisporus (White button mushroom).